The chain runs to 608 residues: UvrABC system protein C (608 aa).

The 79-residue stretch at 13–91 folds into the GIY-YIG domain; it reads HKPGVYIMHD…IKKNSPKYNI (79 aa). The UVR domain occupies 202–237; it reads DELTKKLTDKMMAASKNLNFELAAKLRDSITNIQVI.

The protein belongs to the UvrC family. Interacts with UvrB in an incision complex.

It is found in the cytoplasm. Functionally, the UvrABC repair system catalyzes the recognition and processing of DNA lesions. UvrC both incises the 5' and 3' sides of the lesion. The N-terminal half is responsible for the 3' incision and the C-terminal half is responsible for the 5' incision. This Finegoldia magna (strain ATCC 29328 / DSM 20472 / WAL 2508) (Peptostreptococcus magnus) protein is UvrABC system protein C.